Reading from the N-terminus, the 329-residue chain is Calponin-3 (329 aa).

K23 carries the post-translational modification N6-acetyllysine. Residues 26–130 (HQAEEDLRNW…TLVALAGLAK (105 aa)) form the Calponin-homology (CH) domain. K158 carries the N6-methyllysine modification. 3 Calponin-like repeats span residues 164 to 189 (IGLQMGTNKCASQAGMTAYGTRRHLY), 204 to 229 (ISLQMGTNKGASQAGMLAPGTRRDIY), and 243 to 268 (ISLQMGTNKVASQKGMSVYGLGRQVY). A disordered region spans residues 280 to 329 (VIHNGSQGTGTNGSEISDSDYQAEYPDEYHGEYQDDYPRDYQYGDQGIDY). A compositionally biased stretch (basic and acidic residues) spans 306–318 (DEYHGEYQDDYPR).

Belongs to the calponin family.

Functionally, thin filament-associated protein that is implicated in the regulation and modulation of smooth muscle contraction. It is capable of binding to actin, calmodulin and tropomyosin. The interaction of calponin with actin inhibits the actomyosin Mg-ATPase activity. This Bos taurus (Bovine) protein is Calponin-3 (CNN3).